The sequence spans 406 residues: Bifunctional enzyme IspD/IspF (406 aa).

A 2-C-methyl-D-erythritol 4-phosphate cytidylyltransferase region spans residues 1 to 247 (MSLIRVNGEA…ALFFNPAKDT (247 aa)). Residues 248-406 (FIGMGFDTHA…HVSMRYKQKL (159 aa)) are 2-C-methyl-D-erythritol 2,4-cyclodiphosphate synthase. 2 residues coordinate a divalent metal cation: D254 and H256. Residues 254-256 (DTH) and 280-281 (HS) contribute to the 4-CDP-2-C-methyl-D-erythritol 2-phosphate site. An a divalent metal cation-binding site is contributed by H288. 4-CDP-2-C-methyl-D-erythritol 2-phosphate is bound by residues 302-304 (DIG), 307-311 (FPDND), 378-381 (TTME), F385, and K388.

The protein in the N-terminal section; belongs to the IspD/TarI cytidylyltransferase family. IspD subfamily. In the C-terminal section; belongs to the IspF family. A divalent metal cation serves as cofactor.

The catalysed reaction is 2-C-methyl-D-erythritol 4-phosphate + CTP + H(+) = 4-CDP-2-C-methyl-D-erythritol + diphosphate. It catalyses the reaction 4-CDP-2-C-methyl-D-erythritol 2-phosphate = 2-C-methyl-D-erythritol 2,4-cyclic diphosphate + CMP. Its pathway is isoprenoid biosynthesis; isopentenyl diphosphate biosynthesis via DXP pathway; isopentenyl diphosphate from 1-deoxy-D-xylulose 5-phosphate: step 2/6. The protein operates within isoprenoid biosynthesis; isopentenyl diphosphate biosynthesis via DXP pathway; isopentenyl diphosphate from 1-deoxy-D-xylulose 5-phosphate: step 4/6. Its function is as follows. Bifunctional enzyme that catalyzes the formation of 4-diphosphocytidyl-2-C-methyl-D-erythritol from CTP and 2-C-methyl-D-erythritol 4-phosphate (MEP) (IspD), and catalyzes the conversion of 4-diphosphocytidyl-2-C-methyl-D-erythritol 2-phosphate (CDP-ME2P) to 2-C-methyl-D-erythritol 2,4-cyclodiphosphate (ME-CPP) with a corresponding release of cytidine 5-monophosphate (CMP) (IspF). This is Bifunctional enzyme IspD/IspF from Helicobacter pylori (strain P12).